The following is a 252-amino-acid chain: ATP synthase subunit a (252 aa).

Helical transmembrane passes span 29–49, 87–107, 117–137, 146–166, 188–208, and 211–231; these read FTNS…FLFL, FFPL…LGLF, IIVT…YGFM, LFVP…IEVI, ITLK…AVGV, and SILP…VAFL.

The protein belongs to the ATPase A chain family. In terms of assembly, F-type ATPases have 2 components, CF(1) - the catalytic core - and CF(0) - the membrane proton channel. CF(1) has five subunits: alpha(3), beta(3), gamma(1), delta(1), epsilon(1). CF(0) has three main subunits: a(1), b(2) and c(9-12). The alpha and beta chains form an alternating ring which encloses part of the gamma chain. CF(1) is attached to CF(0) by a central stalk formed by the gamma and epsilon chains, while a peripheral stalk is formed by the delta and b chains.

It is found in the cell inner membrane. Key component of the proton channel; it plays a direct role in the translocation of protons across the membrane. The sequence is that of ATP synthase subunit a from Mesorhizobium japonicum (strain LMG 29417 / CECT 9101 / MAFF 303099) (Mesorhizobium loti (strain MAFF 303099)).